The sequence spans 76 residues: Heat shock factor-binding protein 1 (76 aa).

It belongs to the HSBP1 family. In terms of assembly, homohexamer. Associates with heptad repeats of HSF1 trimers and probably also HSF1 monomers, and with HSP70. Association with HSF1 trimers and HSP70 coincides with attenuation of heat shock response and the conversion of HSF1 trimer to monomer.

It localises to the nucleus. In terms of biological role, negative regulator of the heat shock response. Negatively affects HSF1 DNA-binding activity. May have a role in the suppression of the activation of the stress response during the aging process. The chain is Heat shock factor-binding protein 1 (Hsbp1) from Mus musculus (Mouse).